We begin with the raw amino-acid sequence, 321 residues long: Ferredoxin--NADP reductase (321 aa).

FAD-binding residues include D28, Q36, Y41, A81, F115, D274, and S315.

The protein belongs to the ferredoxin--NADP reductase type 2 family. As to quaternary structure, homodimer. The cofactor is FAD.

The enzyme catalyses 2 reduced [2Fe-2S]-[ferredoxin] + NADP(+) + H(+) = 2 oxidized [2Fe-2S]-[ferredoxin] + NADPH. This is Ferredoxin--NADP reductase from Frankia alni (strain DSM 45986 / CECT 9034 / ACN14a).